The sequence spans 187 residues: UPF0340 protein SPP_0683 (187 aa).

This sequence belongs to the UPF0340 family.

This chain is UPF0340 protein SPP_0683, found in Streptococcus pneumoniae (strain P1031).